The following is a 239-amino-acid chain: RING finger protein 151 (239 aa).

The segment at 20–58 (CSVCHGVLKRPTRLPCSHIFCKKCIFRWLARQNTCPCCR) adopts an RING-type zinc-finger fold. Residues 101 to 156 (EHQDSCPFELMACPNEGCTVQVLRGVLDEHRQHCQQNGQQRCPLGCGSTLAALEGE) form a TRAF-type zinc finger.

In terms of assembly, interacts with DTNBP1. Expressed in testis. Expressed in round spermatids of the stages VII-VIII semniniferous tubules. Expressed in elongating spermatids of stages VIII-IX seminiferous tubules (at protein level).

It is found in the cytoplasm. Its subcellular location is the nucleus. Its function is as follows. May be involved in acrosome formation of spermatids. The protein is RING finger protein 151 (Rnf151) of Mus musculus (Mouse).